Consider the following 191-residue polypeptide: Adenine phosphoribosyltransferase 5 (191 aa).

This sequence belongs to the purine/pyrimidine phosphoribosyltransferase family. In terms of assembly, homodimer.

The protein resides in the cytoplasm. It catalyses the reaction AMP + diphosphate = 5-phospho-alpha-D-ribose 1-diphosphate + adenine. It participates in purine metabolism; AMP biosynthesis via salvage pathway; AMP from adenine: step 1/1. In terms of biological role, catalyzes a salvage reaction resulting in the formation of AMP, that is energically less costly than de novo synthesis. May contribute to the recycling of adenine into adenylate nucleotides and the inactivation of cytokinins by phosphoribosylation. Possesses low activity toward adenine, but can efficiently convert cytokinins from free bases (active form) to the corresponding nucleotides (inactive form). The protein is Adenine phosphoribosyltransferase 5 (APT5) of Arabidopsis thaliana (Mouse-ear cress).